Here is a 281-residue protein sequence, read N- to C-terminus: Tumor necrosis factor ligand superfamily member 10 (281 aa).

The Cytoplasmic segment spans residues 1–17 (MAMMEVQGGPSLGQTCV). The chain crosses the membrane as a helical; Signal-anchor for type II membrane protein span at residues 18 to 38 (LIVIFTVLLQSLCVAVTYVYF). The Extracellular segment spans residues 39–281 (TNELKQMQDK…ASFFGAFLVG (243 aa)). The THD domain maps to 122 to 280 (VAAHITGTRG…EASFFGAFLV (159 aa)). Residues 124–144 (AHITGTRGRSNTLSSPNSKNE) form a disordered region. Residues 130 to 141 (RGRSNTLSSPNS) show a composition bias toward polar residues. Cys230 provides a ligand contact to Zn(2+).

This sequence belongs to the tumor necrosis factor family. In terms of assembly, homotrimer. One TNFSF10 homotrimer interacts with three TNFSF10A mononers. One TNFSF10 homotrimer interacts with three TNFSF10B mononers. Post-translationally, tyrosine phosphorylated by PKDCC/VLK. In terms of tissue distribution, widespread; most predominant in spleen, lung and prostate.

It localises to the cell membrane. Its subcellular location is the secreted. In terms of biological role, cytokine that binds to TNFRSF10A/TRAILR1, TNFRSF10B/TRAILR2, TNFRSF10C/TRAILR3, TNFRSF10D/TRAILR4 and possibly also to TNFRSF11B/OPG. Induces apoptosis. Its activity may be modulated by binding to the decoy receptors TNFRSF10C/TRAILR3, TNFRSF10D/TRAILR4 and TNFRSF11B/OPG that cannot induce apoptosis. This is Tumor necrosis factor ligand superfamily member 10 (TNFSF10) from Homo sapiens (Human).